The following is a 156-amino-acid chain: Ribosomal RNA large subunit methyltransferase H (156 aa).

S-adenosyl-L-methionine is bound by residues G104 and 123-128 (LSAMTL).

It belongs to the RNA methyltransferase RlmH family. In terms of assembly, homodimer.

Its subcellular location is the cytoplasm. It carries out the reaction pseudouridine(1915) in 23S rRNA + S-adenosyl-L-methionine = N(3)-methylpseudouridine(1915) in 23S rRNA + S-adenosyl-L-homocysteine + H(+). Its function is as follows. Specifically methylates the pseudouridine at position 1915 (m3Psi1915) in 23S rRNA. The sequence is that of Ribosomal RNA large subunit methyltransferase H from Chromobacterium violaceum (strain ATCC 12472 / DSM 30191 / JCM 1249 / CCUG 213 / NBRC 12614 / NCIMB 9131 / NCTC 9757 / MK).